The following is a 218-amino-acid chain: Cytochrome b6 (218 aa).

The helical transmembrane segment at 35–55 threads the bilayer; that stretch reads IFYCLGGITLVCFLIQFATGF. Residue Cys-38 participates in heme c binding. Heme b is bound by residues His-89 and His-103. 3 consecutive transmembrane segments (helical) span residues 93 to 113, 119 to 139, and 189 to 209; these read ASMM…TGGF, LTWV…VTGY, and LHTF…FLMI. Residues His-190 and His-205 each coordinate heme b.

Belongs to the cytochrome b family. PetB subfamily. As to quaternary structure, the 4 large subunits of the cytochrome b6-f complex are cytochrome b6, subunit IV (17 kDa polypeptide, PetD), cytochrome f and the Rieske protein, while the 4 small subunits are PetG, PetL, PetM and PetN. The complex functions as a dimer. Heme b serves as cofactor. The cofactor is heme c.

It localises to the cellular thylakoid membrane. Functionally, component of the cytochrome b6-f complex, which mediates electron transfer between photosystem II (PSII) and photosystem I (PSI), cyclic electron flow around PSI, and state transitions. This Synechococcus sp. (strain CC9605) protein is Cytochrome b6.